An 808-amino-acid polypeptide reads, in one-letter code: Protein NLP5 (808 aa).

The segment covering 56-68 (PTQDTSNSLSQMY) has biased composition (polar residues). The segment at 56–83 (PTQDTSNSLSQMYGQDCPERSSLEDQNQ) is disordered. Residues 536 to 617 (NRVTEKKRTK…IDSVEGVSGH (82 aa)) form the RWP-RK domain. The segment at 660-680 (SPGSSCSHSSSCSSETQVIKE) is disordered. Low complexity predominate over residues 663-673 (SSCSHSSSCSS). The PB1 domain maps to 710–793 (FLRVKVSYEE…QTIKLLLQLS (84 aa)).

It localises to the nucleus. Functionally, probable transcription factor. The polypeptide is Protein NLP5 (NLP5) (Arabidopsis thaliana (Mouse-ear cress)).